The following is a 438-amino-acid chain: Na(+)/H(+) antiporter NhaA (438 aa).

11 helical membrane-spanning segments follow: residues 23–43 (FGGI…NSFL), 62–82 (FFIG…LFFL), 104–124 (SFPV…YFFL), 133–153 (GFGI…MLLG), 162–182 (VFLI…IALF), 185–205 (TNLK…LAVL), 221–241 (VLLW…AVIL), 302–322 (FLAP…NAGV), 337–357 (LGVI…ITFI), 372–392 (WWHI…SMFI), and 410–430 (IAIL…LFAL).

This sequence belongs to the NhaA Na(+)/H(+) (TC 2.A.33) antiporter family.

It localises to the cell inner membrane. The catalysed reaction is Na(+)(in) + 2 H(+)(out) = Na(+)(out) + 2 H(+)(in). Functionally, na(+)/H(+) antiporter that extrudes sodium in exchange for external protons. The chain is Na(+)/H(+) antiporter NhaA from Helicobacter pylori (strain ATCC 700392 / 26695) (Campylobacter pylori).